The sequence spans 330 residues: Glucokinase (330 aa).

Residue 14-19 (ADIGGT) coordinates ATP.

It belongs to the bacterial glucokinase family.

The protein localises to the cytoplasm. It catalyses the reaction D-glucose + ATP = D-glucose 6-phosphate + ADP + H(+). The chain is Glucokinase from Colwellia psychrerythraea (strain 34H / ATCC BAA-681) (Vibrio psychroerythus).